The sequence spans 765 residues: Single-minded homolog 1 (765 aa).

A bHLH domain is found at 1-53 (MKEKSKNAARTRREKENSEFYELAKLLPLPSAITSQLDKASIIRLTTSYLKMR). 2 PAS domains span residues 77 to 147 (GREL…QPYH) and 218 to 288 (PPSA…LVKG). The 44-residue stretch at 292–335 (TKYYRFLAKQGGWVWVQSYATIVHNSRSSRPHCIVSVNYVLTDT) folds into the PAC domain. A Single-minded C-terminal domain is found at 336-765 (EYKGLQLSLD…GTSVIITNGS (430 aa)). 2 stretches are compositionally biased toward low complexity: residues 352–365 (PTFS…PTIS) and 373–385 (SRLS…SRTS). Disordered stretches follow at residues 352–428 (PTFS…PGSQ) and 527–560 (WDED…PHEP). The Nuclear localization signal motif lies at 368–387 (RKGAKSRLSSSKSKSRTSPY). Positions 394–404 (HTERSESDHDS) are enriched in basic and acidic residues.

In terms of assembly, efficient DNA binding requires dimerization with another bHLH protein. Heterodimer; forms a heterodimer with ARNT, ARNT2. Detected in lung, skeletal muscle and kidney. During fetal development it is found in the CNS, developing kidney, mesodermal and endodermal tissues, including developing somites, mesonephric duct, and foregut.

The protein localises to the nucleus. Functionally, transcriptional factor that may have pleiotropic effects during embryogenesis and in the adult. This Mus musculus (Mouse) protein is Single-minded homolog 1 (Sim1).